The following is a 95-amino-acid chain: Osteocalcin 1 (95 aa).

Residues 1 to 21 form the signal peptide; the sequence is MKTLSVLVLCSLAVLCLTSDA. The propeptide occupies 22–50; the sequence is SFSSQPAVDTPAQEGLFVEQEQASSVVRQ. The Gla domain maps to 45–91; it reads SSVVRQAPKELSLSQLESLREVCELNLACEDMMDTSGIIAAYTTYYG. 3 residues coordinate Ca(2+): E61, E65, and E68. 3 positions are modified to 4-carboxyglutamate: E61, E65, and E68. The cysteines at positions 67 and 73 are disulfide-linked.

Belongs to the osteocalcin/matrix Gla protein family. Post-translationally, gamma-carboxyglutamate residues are formed by vitamin K dependent carboxylation by GGCX. These residues are essential for the binding of calcium.

The protein localises to the secreted. Its function is as follows. The carboxylated form is one of the main organic components of the bone matrix, which constitutes 1-2% of the total bone protein. The carboxylated form binds strongly to apatite and calcium. This is Osteocalcin 1 from Solea senegalensis (Senegalese sole).